A 129-amino-acid polypeptide reads, in one-letter code: Small ribosomal subunit protein uS11 (129 aa).

Belongs to the universal ribosomal protein uS11 family. Part of the 30S ribosomal subunit. Interacts with proteins S7 and S18. Binds to IF-3.

Its function is as follows. Located on the platform of the 30S subunit, it bridges several disparate RNA helices of the 16S rRNA. Forms part of the Shine-Dalgarno cleft in the 70S ribosome. In Methylobacterium nodulans (strain LMG 21967 / CNCM I-2342 / ORS 2060), this protein is Small ribosomal subunit protein uS11.